A 448-amino-acid polypeptide reads, in one-letter code: N-succinylarginine dihydrolase (448 aa).

Residues 19–28 (AGLSYGNVAS), Asn110, and 137–138 (HR) contribute to the substrate site. Glu174 is an active-site residue. Residue Arg214 participates in substrate binding. His250 is a catalytic residue. Residues Asp252 and Asn364 each contribute to the substrate site. Catalysis depends on Cys370, which acts as the Nucleophile.

It belongs to the succinylarginine dihydrolase family. In terms of assembly, homodimer.

The catalysed reaction is N(2)-succinyl-L-arginine + 2 H2O + 2 H(+) = N(2)-succinyl-L-ornithine + 2 NH4(+) + CO2. It functions in the pathway amino-acid degradation; L-arginine degradation via AST pathway; L-glutamate and succinate from L-arginine: step 2/5. In terms of biological role, catalyzes the hydrolysis of N(2)-succinylarginine into N(2)-succinylornithine, ammonia and CO(2). This chain is N-succinylarginine dihydrolase, found in Pseudoalteromonas translucida (strain TAC 125).